A 78-amino-acid chain; its full sequence is Large ribosomal subunit protein eL20 (78 aa).

Belongs to the eukaryotic ribosomal protein eL20 family. In terms of assembly, part of the 50S ribosomal subunit. Binds 23S rRNA.

The polypeptide is Large ribosomal subunit protein eL20 (Pyrobaculum aerophilum (strain ATCC 51768 / DSM 7523 / JCM 9630 / CIP 104966 / NBRC 100827 / IM2)).